The sequence spans 149 residues: Interleukin-2 (149 aa).

An N-terminal signal peptide occupies residues 1–20 (MYRMQLLSCIALTLAVLANS). O-linked (GalNAc...) threonine glycosylation is present at threonine 23. Cysteine 78 and cysteine 121 are oxidised to a cystine. A glycan (N-linked (GlcNAc...) asparagine) is linked at asparagine 106.

The protein belongs to the IL-2 family.

The protein localises to the secreted. Functionally, cytokine produced by activated CD4-positive helper T-cells and to a lesser extend activated CD8-positive T-cells and natural killer (NK) cells that plays pivotal roles in the immune response and tolerance. Binds to a receptor complex composed of either the high-affinity trimeric IL-2R (IL2RA/CD25, IL2RB/CD122 and IL2RG/CD132) or the low-affinity dimeric IL-2R (IL2RB and IL2RG). Interaction with the receptor leads to oligomerization and conformation changes in the IL-2R subunits resulting in downstream signaling starting with phosphorylation of JAK1 and JAK3. In turn, JAK1 and JAK3 phosphorylate the receptor to form a docking site leading to the phosphorylation of several substrates including STAT5. This process leads to activation of several pathways including STAT, phosphoinositide-3-kinase/PI3K and mitogen-activated protein kinase/MAPK pathways. Functions as a T-cell growth factor and can increase NK-cell cytolytic activity as well. Promotes strong proliferation of activated B-cells and subsequently immunoglobulin production. Plays a pivotal role in regulating the adaptive immune system by controlling the survival and proliferation of regulatory T-cells, which are required for the maintenance of immune tolerance. Moreover, participates in the differentiation and homeostasis of effector T-cell subsets, including Th1, Th2, Th17 as well as memory CD8-positive T-cells. The chain is Interleukin-2 (IL2) from Equus caballus (Horse).